Here is a 209-residue protein sequence, read N- to C-terminus: Guanylate kinase (209 aa).

The Guanylate kinase-like domain occupies 5–184 (GLLIVFSGPS…AAERVKRVIE (180 aa)). Residue 12–19 (GPSGVGKG) participates in ATP binding.

It belongs to the guanylate kinase family.

The protein resides in the cytoplasm. The catalysed reaction is GMP + ATP = GDP + ADP. Its function is as follows. Essential for recycling GMP and indirectly, cGMP. This chain is Guanylate kinase, found in Streptococcus agalactiae serotype Ia (strain ATCC 27591 / A909 / CDC SS700).